Consider the following 384-residue polypeptide: Na(+)/H(+) antiporter NhaA (384 aa).

11 helical membrane-spanning segments follow: residues 17 to 37 (SGLF…SAIA), 53 to 73 (LEYW…GLEL), 89 to 109 (MLPI…FLVM), 118 to 138 (GAGI…SLLG), 147 to 167 (IFLT…IAVF), 171 to 191 (TLLW…LILN), 198 to 218 (LIPY…SGVH), 251 to 271 (PVAF…VLSS), 283 to 303 (IGIA…LSML), 321 to 341 (ILAV…ITLL), and 354 to 374 (FVIL…LKYV).

This sequence belongs to the NhaA Na(+)/H(+) (TC 2.A.33) antiporter family.

Its subcellular location is the cell inner membrane. It carries out the reaction Na(+)(in) + 2 H(+)(out) = Na(+)(out) + 2 H(+)(in). Functionally, na(+)/H(+) antiporter that extrudes sodium in exchange for external protons. The sequence is that of Na(+)/H(+) antiporter NhaA from Flavobacterium psychrophilum (strain ATCC 49511 / DSM 21280 / CIP 103535 / JIP02/86).